Consider the following 99-residue polypeptide: Small integral membrane protein 14 (99 aa).

At 1-49 the chain is on the lumenal side; sequence MAEGGFDPCECICSHEHAMRRLINLLRQSQSYCTDTECLRELPGPSGDS. The chain crosses the membrane as a helical span at residues 50–70; the sequence is GISITVILMAWMVIAVLLFLL. Over 71-99 the chain is Cytoplasmic; it reads RPPNLRGSSLPGKPSSPHSGQDPPAPPVD. The interval 77-99 is disordered; the sequence is GSSLPGKPSSPHSGQDPPAPPVD.

The protein resides in the endoplasmic reticulum membrane. This Rattus norvegicus (Rat) protein is Small integral membrane protein 14 (Smim14).